Reading from the N-terminus, the 1624-residue chain is Latent-transforming growth factor beta-binding protein 4 (1624 aa).

The N-terminal stretch at 1 to 27 (MPRPGTSGRRPLLLVLLLPLFAAATSA) is a signal peptide. Positions 125–146 (RRPRGPGGRGLLRRRPPQRAPA) are disordered. The EGF-like 1 domain maps to 149–181 (APVLCPLICHNGGVCVKPDRCLCPPDFAGKFCQ). 6 disulfide bridges follow: C153-C163, C157-C169, C171-C180, C289-C311, C298-C324, and C312-C327. Positions 287–339 (GYCFRELRGGECASPLPGLRTQEVCCRGAGLAWGVHDCQLCSERLGNSERVSA) constitute a TB 1 domain. N352 is a glycosylation site (N-linked (GlcNAc...) asparagine). The 41-residue stretch at 357-397 (DVDECATGGRCQHGECANTRGGYTCVCPDGFLLDSSRSSCI) folds into the EGF-like 2; calcium-binding domain. 7 disulfide bridges follow: C361-C372, C367-C381, C383-C396, C409-C431, C418-C444, C432-C447, and C433-C459. The 53-residue stretch at 407-459 (GPCFRVLRDGGCSLPILRNITKQICCCSRVGKAWGRGCQLCPPFGSEGFREIC) folds into the TB 2 domain. N-linked (GlcNAc...) asparagine glycosylation occurs at N425. Positions 474-546 (YNTRPLGQEP…PEIPESGPSS (73 aa)) are disordered. The segment covering 487–500 (SLSQPRTLPATSRP) has biased composition (polar residues). Positions 508 to 522 (HRLEPRPEPRPDPRP) are enriched in basic and acidic residues. One can recognise an EGF-like 3 domain in the interval 545–586 (SSGMCQRNPQVCGPGRCISRPSGYTCACDSGFRLSPQGTRCI). Disulfide bonds link C549–C561, C556–C570, C572–C585, C591–C603, C598–C612, C614–C627, C633–C645, C640–C654, C656–C669, C675–C687, C682–C696, C698–C707, C714–C726, C721–C735, C737–C750, C756–C768, C763–C777, C779–C792, C838–C851, C845–C860, C862–C876, C882–C894, C888–C903, C905–C918, C924–C935, C930–C944, C946–C959, C1053–C1065, C1059–C1074, and C1076–C1089. The EGF-like 4; calcium-binding domain maps to 587–628 (DVDECRRVPPPCAPGRCENSPGSFRCVCGPGFRAGPRAAECL). Positions 629–670 (DVDECHRVPPPCDLGRCENTPGSFLCVCPAGYQAAPHGASCQ) constitute an EGF-like 5; calcium-binding domain. One can recognise an EGF-like 6; calcium-binding domain in the interval 671 to 708 (DVDECTQSPGLCGRGACKNLPGSFRCVCPAGFRGSACE). An EGF-like 7; calcium-binding domain is found at 710 to 751 (DVDECAQEPPPCGPGRCDNTAGSFHCACPAGFRSRGPGAPCQ). The region spanning 752-793 (DVDECARSPPPCTYGRCENTEGSFQCVCPMGFQPNTAGSECE) is the EGF-like 8; calcium-binding domain. Residues 834 to 877 (DVDECSSGAPPCGPHGHCTNTEGSFRCSCAPGYRAPSGRPGPCA) form the EGF-like 9; calcium-binding domain. The 42-residue stretch at 878 to 919 (DVNECLEGDFCFPHGECLNTDGSFACTCAPGYRPGPRGASCL) folds into the EGF-like 10; calcium-binding domain. Residues 920–960 (DVDECSEEDLCQSGICTNTDGSFECICPPGHRAGPDLASCL) enclose the EGF-like 11; calcium-binding domain. The EGF-like 12; calcium-binding domain occupies 1049 to 1090 (DVDECRNRSFCGAHAVCQNLPGSFQCLCDQGYEGARDGRHCV). The N-linked (GlcNAc...) asparagine glycan is linked to N1055. A disordered region spans residues 1130-1179 (GRCVPPRTSAGTFPGSQPQAPASPVLPARPPPPPLPRRPSTPRQGPVGSG). The segment covering 1138–1149 (SAGTFPGSQPQA) has biased composition (polar residues). The span at 1156 to 1168 (PARPPPPPLPRRP) shows a compositional bias: pro residues. The 55-residue stretch at 1181–1235 (RECYFDTAAPDACDNILARNVTWQECCCTVGEGWGSGCRIQQCPGTETAEYQSLC) folds into the TB 3 domain. Cystine bridges form between C1183-C1206, C1193-C1218, C1207-C1223, C1208-C1235, C1257-C1270, C1265-C1279, C1281-C1294, C1300-C1312, C1307-C1321, and C1323-C1336. An N-linked (GlcNAc...) asparagine glycan is attached at N1200. Residues 1253–1295 (DVDECQLFRDQVCKSGVCVNTAPGYSCYCSNGYYYHTQRLECI) form the EGF-like 13; calcium-binding domain. The 42-residue stretch at 1296–1337 (DNDECADEEPACEGGRCVNTVGSYHCTCEPPLVLDGSQRRCV) folds into the EGF-like 14; calcium-binding domain. N-linked (GlcNAc...) asparagine glycosylation is present at N1339. The TB 4 domain occupies 1349–1402 (GVCWQEVGADLVCSHPRLDRQATYTECCCLYGEAWGMDCALCPAQDSDDFEALC). Cystine bridges form between C1351/C1375, C1361/C1387, C1376/C1390, and C1377/C1402. Residues 1446–1458 (ALPYDPYPPPPGP) are compositionally biased toward pro residues. Positions 1446 to 1524 (ALPYDPYPPP…PPEGGSYAGS (79 aa)) are disordered. A compositionally biased stretch (basic and acidic residues) spans 1501 to 1510 (RSRDTRRSFP). EGF-like domains follow at residues 1533–1573 (EAEE…MACV) and 1574–1618 (DINE…HHCA). Intrachain disulfides connect C1537/C1548, C1543/C1557, C1559/C1572, C1578/C1593, C1588/C1602, and C1604/C1617.

It belongs to the LTBP family. As to quaternary structure, forms part of the large latent transforming growth factor beta precursor complex; removal is essential for activation of complex. Interacts with LTBP1 and TGFB1. Interacts with EFEMP2; this interaction promotes fibrillar deposition of EFEMP2. Contains hydroxylated asparagine residues. As to expression, highly expressed in heart, skeletal muscle, pancreas, uterus, and small intestine. Weakly expressed in placenta and lung.

The protein resides in the secreted. It is found in the extracellular space. It localises to the extracellular matrix. Its function is as follows. Key regulator of transforming growth factor beta (TGFB1, TGFB2 and TGFB3) that controls TGF-beta activation by maintaining it in a latent state during storage in extracellular space. Associates specifically via disulfide bonds with the Latency-associated peptide (LAP), which is the regulatory chain of TGF-beta, and regulates integrin-dependent activation of TGF-beta. The sequence is that of Latent-transforming growth factor beta-binding protein 4 (LTBP4) from Homo sapiens (Human).